Here is a 114-residue protein sequence, read N- to C-terminus: Fluoride-specific ion channel FluC 1 (114 aa).

The next 4 helical transmembrane spans lie at 3 to 23 (IDIKNNTFFLISLGAFLGALF), 30 to 50 (IFIVNLIGCFLLGFFNSLNIL), 55 to 75 (LTLCVGLCGSMTTFSSWMSHL), and 87 to 107 (FLLNSLSIVLMGVLSIALGHI). 2 residues coordinate Na(+): Gly63 and Thr66.

It belongs to the fluoride channel Fluc/FEX (TC 1.A.43) family.

It is found in the cell inner membrane. The catalysed reaction is fluoride(in) = fluoride(out). Na(+) is not transported, but it plays an essential structural role and its presence is essential for fluoride channel function. Functionally, fluoride-specific ion channel. Important for reducing fluoride concentration in the cell, thus reducing its toxicity. The sequence is that of Fluoride-specific ion channel FluC 1 from Prochlorococcus marinus (strain NATL2A).